The chain runs to 152 residues: Deoxyuridine 5'-triphosphate nucleotidohydrolase (152 aa).

Residues 72-74 (RSG), N85, and 89-91 (TID) contribute to the substrate site.

The protein belongs to the dUTPase family. Mg(2+) serves as cofactor.

The catalysed reaction is dUTP + H2O = dUMP + diphosphate + H(+). Its pathway is pyrimidine metabolism; dUMP biosynthesis; dUMP from dCTP (dUTP route): step 2/2. Its function is as follows. This enzyme is involved in nucleotide metabolism: it produces dUMP, the immediate precursor of thymidine nucleotides and it decreases the intracellular concentration of dUTP so that uracil cannot be incorporated into DNA. The sequence is that of Deoxyuridine 5'-triphosphate nucleotidohydrolase from Afipia carboxidovorans (strain ATCC 49405 / DSM 1227 / KCTC 32145 / OM5) (Oligotropha carboxidovorans).